Consider the following 243-residue polypeptide: Beta-glucanase (243 aa).

Residues 1–27 form the signal peptide; that stretch reads MSYRVKRMLMLLVTGLFLSLSTFAASA. In terms of domain architecture, GH16 spans 29 to 243; it reads AQTGGSFYEP…SLHWVRYTKR (215 aa). A disulfide bridge connects residues cysteine 61 and cysteine 90. Glutamate 134 acts as the Nucleophile in catalysis. Glutamate 138 acts as the Proton donor in catalysis.

The protein belongs to the glycosyl hydrolase 16 family.

The catalysed reaction is Hydrolysis of (1-&gt;4)-beta-D-glucosidic linkages in beta-D-glucans containing (1-&gt;3)- and (1-&gt;4)-bonds.. The polypeptide is Beta-glucanase (bg1) (Bacillus licheniformis).